We begin with the raw amino-acid sequence, 185 residues long: MIDEALFEAEEKMEKAVTVAKDDLGSVRTGRANPGMFSRIVIDYYGSITPITQLASINVPEARMVIVKPYEASQLNAIETAIRNSDLGVNPSNDGSIIRISVPQLTEERRRELVKQAKSKGEDSKVTLRNIRRKAMDELGRIQKDGEAGEDEVGRAEKELDKTTAKYVHTVEELVKHKEAELMEV.

Belongs to the RRF family.

The protein resides in the cytoplasm. Its function is as follows. Responsible for the release of ribosomes from messenger RNA at the termination of protein biosynthesis. May increase the efficiency of translation by recycling ribosomes from one round of translation to another. This Rhodococcus erythropolis (strain PR4 / NBRC 100887) protein is Ribosome-recycling factor.